We begin with the raw amino-acid sequence, 373 residues long: DNA dC-&gt;dU-editing enzyme APOBEC-3F (373 aa).

2 CMP/dCMP-type deaminase domains span residues 29 to 137 and 174 to 321; these read RRNT…LCRL and DDNY…LRSL. A (Microbial infection) Glycyl lysine isopeptide (Lys-Gly) (interchain with G-Cter in ubiquitin) cross-link involves residue Lys52. Zn(2+) contacts are provided by His65, Cys96, and Cys99. Lys234 participates in a covalent cross-link: (Microbial infection) Glycyl lysine isopeptide (Lys-Gly) (interchain with G-Cter in ubiquitin). Zn(2+) is bound at residue His249. Glu251 serves as the catalytic Proton donor. Cys280 and Cys283 together coordinate Zn(2+). A disulfide bridge connects residues Cys280 and Cys283. Residues Lys334, Lys352, Lys355, and Lys358 each participate in a (Microbial infection) Glycyl lysine isopeptide (Lys-Gly) (interchain with G-Cter in ubiquitin) cross-link.

Belongs to the cytidine and deoxycytidylate deaminase family. As to quaternary structure, homodimer. Interacts with APOBEC3G in an RNA-dependent manner. Interacts with AGO1, AGO2 and AGO3. In terms of assembly, (Microbial infection) Interacts with HIV-1 Vif, leading to its ubiquitination and degradation by the proteasome. In the absence of Vif protein, specifically packaged into HIV-1 virions. Zn(2+) is required as a cofactor. Post-translationally, (Microbial infection) Following infection by HIV-1, ubiquitinated by a cullin-5-RING E3 ubiquitin-protein ligase complex (ECS complex) hijacked by the HIV-1 Vif protein, leading to its degradation. Widely expressed. Highly expressed in ovary.

The protein localises to the cytoplasm. The protein resides in the P-body. It catalyses the reaction a 2'-deoxycytidine in single-stranded DNA + H2O + H(+) = a 2'-deoxyuridine in single-stranded DNA + NH4(+). (Microbial infection) Antiviral activity is neutralized by the HIV-1 virion infectivity factor (Vif), that prevents its incorporation into progeny virions by both inhibiting its translation and/or by inducing its ubiquitination and subsequent degradation by the 26S proteasome. In terms of biological role, DNA deaminase (cytidine deaminase) which acts as an inhibitor of retrovirus replication and retrotransposon mobility via deaminase-dependent and -independent mechanisms. Exhibits antiviral activity against viruse such as HIV-1 or HIV-2. After the penetration of retroviral nucleocapsids into target cells of infection and the initiation of reverse transcription, it can induce the conversion of cytosine to uracil in the minus-sense single-strand viral DNA, leading to G-to-A hypermutations in the subsequent plus-strand viral DNA. The resultant detrimental levels of mutations in the proviral genome, along with a deamination-independent mechanism that works prior to the proviral integration, together exert efficient antiretroviral effects in infected target cells. Selectively targets single-stranded DNA and does not deaminate double-stranded DNA or single- or double-stranded RNA. Exhibits antiviral activity also against hepatitis B virus (HBV), equine infectious anemia virus (EIAV), xenotropic MuLV-related virus (XMRV) and simian foamy virus (SFV) and may inhibit the mobility of LTR and non-LTR retrotransposons. May also play a role in the epigenetic regulation of gene expression through the process of active DNA demethylation. The chain is DNA dC-&gt;dU-editing enzyme APOBEC-3F from Homo sapiens (Human).